The primary structure comprises 539 residues: CTP synthase (539 aa).

Residues M1–L267 are amidoligase domain. S15 lines the CTP pocket. S15 lines the UTP pocket. Residues S16 to L21 and D73 each bind ATP. Positions 73 and 141 each coordinate Mg(2+). Residues D148–E150, K188–Q193, and K224 contribute to the CTP site. UTP contacts are provided by residues K188 to Q193 and K224. One can recognise a Glutamine amidotransferase type-1 domain in the interval T292–K536. G359 is an L-glutamine binding site. Catalysis depends on C386, which acts as the Nucleophile; for glutamine hydrolysis. L-glutamine is bound by residues L387 to Q390, E410, and R464. Residues H509 and E511 contribute to the active site.

The protein belongs to the CTP synthase family. In terms of assembly, homotetramer.

The enzyme catalyses UTP + L-glutamine + ATP + H2O = CTP + L-glutamate + ADP + phosphate + 2 H(+). The catalysed reaction is L-glutamine + H2O = L-glutamate + NH4(+). It carries out the reaction UTP + NH4(+) + ATP = CTP + ADP + phosphate + 2 H(+). It functions in the pathway pyrimidine metabolism; CTP biosynthesis via de novo pathway; CTP from UDP: step 2/2. With respect to regulation, allosterically activated by GTP, when glutamine is the substrate; GTP has no effect on the reaction when ammonia is the substrate. The allosteric effector GTP functions by stabilizing the protein conformation that binds the tetrahedral intermediate(s) formed during glutamine hydrolysis. Inhibited by the product CTP, via allosteric rather than competitive inhibition. In terms of biological role, catalyzes the ATP-dependent amination of UTP to CTP with either L-glutamine or ammonia as the source of nitrogen. Regulates intracellular CTP levels through interactions with the four ribonucleotide triphosphates. In Wolbachia sp. subsp. Brugia malayi (strain TRS), this protein is CTP synthase.